The chain runs to 59 residues: Small ribosomal subunit protein bS21A (59 aa).

Belongs to the bacterial ribosomal protein bS21 family.

This is Small ribosomal subunit protein bS21A from Gloeobacter violaceus (strain ATCC 29082 / PCC 7421).